Reading from the N-terminus, the 325-residue chain is 5-dehydro-2-deoxygluconokinase (325 aa).

Belongs to the carbohydrate kinase PfkB family.

It carries out the reaction 5-dehydro-2-deoxy-D-gluconate + ATP = 6-phospho-5-dehydro-2-deoxy-D-gluconate + ADP + H(+). It participates in polyol metabolism; myo-inositol degradation into acetyl-CoA; acetyl-CoA from myo-inositol: step 5/7. In terms of biological role, catalyzes the phosphorylation of 5-dehydro-2-deoxy-D-gluconate (2-deoxy-5-keto-D-gluconate or DKG) to 6-phospho-5-dehydro-2-deoxy-D-gluconate (DKGP). The polypeptide is 5-dehydro-2-deoxygluconokinase (Bacillus licheniformis (strain ATCC 14580 / DSM 13 / JCM 2505 / CCUG 7422 / NBRC 12200 / NCIMB 9375 / NCTC 10341 / NRRL NRS-1264 / Gibson 46)).